We begin with the raw amino-acid sequence, 419 residues long: tRNA(Met) cytidine acetate ligase (419 aa).

Residues 7 to 20 (ITEY…HLHH), G101, N163, and R188 each bind ATP.

It belongs to the TmcAL family.

The protein resides in the cytoplasm. It carries out the reaction cytidine(34) in elongator tRNA(Met) + acetate + ATP = N(4)-acetylcytidine(34) in elongator tRNA(Met) + AMP + diphosphate. In terms of biological role, catalyzes the formation of N(4)-acetylcytidine (ac(4)C) at the wobble position of elongator tRNA(Met), using acetate and ATP as substrates. First activates an acetate ion to form acetyladenylate (Ac-AMP) and then transfers the acetyl group to tRNA to form ac(4)C34. This is tRNA(Met) cytidine acetate ligase from Syntrophotalea carbinolica (strain DSM 2380 / NBRC 103641 / GraBd1) (Pelobacter carbinolicus).